We begin with the raw amino-acid sequence, 103 residues long: uncharacterized protein (103 aa).

The N-terminal stretch at 1–22 is a signal peptide; sequence MFRPFLNSLMLGSLFFPFIAIA.

It to the N-terminal of the FimA/PapA family of fimbria proteins.

This is an uncharacterized protein from Escherichia coli (strain K12).